Here is a 474-residue protein sequence, read N- to C-terminus: tRNA-2-methylthio-N(6)-dimethylallyladenosine synthase (474 aa).

Positions 3-120 (KKLHIKTWGC…LPEMINSVRG (118 aa)) constitute an MTTase N-terminal domain. [4Fe-4S] cluster is bound by residues Cys12, Cys49, Cys83, Cys157, Cys161, and Cys164. Positions 143 to 375 (RAEGPTAFVS…QERINQQAMA (233 aa)) constitute a Radical SAM core domain. Positions 378-441 (RRMLGTTQRI…PNSLRGKVVR (64 aa)) constitute a TRAM domain.

It belongs to the methylthiotransferase family. MiaB subfamily. Monomer. The cofactor is [4Fe-4S] cluster.

It localises to the cytoplasm. The enzyme catalyses N(6)-dimethylallyladenosine(37) in tRNA + (sulfur carrier)-SH + AH2 + 2 S-adenosyl-L-methionine = 2-methylsulfanyl-N(6)-dimethylallyladenosine(37) in tRNA + (sulfur carrier)-H + 5'-deoxyadenosine + L-methionine + A + S-adenosyl-L-homocysteine + 2 H(+). Functionally, catalyzes the methylthiolation of N6-(dimethylallyl)adenosine (i(6)A), leading to the formation of 2-methylthio-N6-(dimethylallyl)adenosine (ms(2)i(6)A) at position 37 in tRNAs that read codons beginning with uridine. This is tRNA-2-methylthio-N(6)-dimethylallyladenosine synthase from Shigella boydii serotype 18 (strain CDC 3083-94 / BS512).